We begin with the raw amino-acid sequence, 421 residues long: Atrochrysone carboxyl ACP thioesterase (421 aa).

Zn(2+)-binding residues include histidine 207, histidine 209, aspartate 211, and histidine 212. Aspartate 211 serves as the catalytic Proton donor/acceptor.

This sequence belongs to the metallo-beta-lactamase superfamily. Zn(2+) serves as cofactor. In terms of tissue distribution, specifically expressed in conidia.

The catalysed reaction is atrochrysone carboxyl-[ACP] + H2O = atrochrysone carboxylate + holo-[ACP] + H(+). Its pathway is secondary metabolite biosynthesis. Functionally, atrochrysone carboxyl ACP thioesterase; part of the gene cluster that mediates the biosynthesis of trypacidin, a mycotoxin with antiprotozoal activity and that plays a role in the infection process. The pathway begins with the synthesis of atrochrysone thioester by the polyketide synthase (PKS) tpcC. The atrochrysone carboxyl ACP thioesterase tpcB then breaks the thioester bond and releases the atrochrysone carboxylic acid from tpcC. The decarboxylase tpcK converts atrochrysone carboxylic acid to atrochrysone which is further reduced into emodin anthrone. The next step is performed by the emodin anthrone oxygenase tpcL that catalyzes the oxidation of emodin anthrone to emodin. Emodin O-methyltransferase encoded by tpcA catalyzes methylation of the 8-hydroxy group of emodin to form questin. Ring cleavage of questin by questin oxidase tpcI leads to desmethylsulochrin via several intermediates including questin epoxide. Another methylation step catalyzed by tpcM leads to the formation of sulochrin which is further converted to monomethylsulfochrin by tpcH. Finally, the tpcJ catalyzes the conversion of monomethylsulfochrin to trypacidin. Trypacidin is toxic for human pulmonary and bronchial epithelial cells by initiating the intracellular formation of nitric oxide (NO) and hydrogen peroxide (H(2)O(2)), thus triggering host necrotic cell death. The trypacidin pathway is also able to produce endocrocin via a distinct route from the endocrocin Enc pathway. The chain is Atrochrysone carboxyl ACP thioesterase from Aspergillus fumigatus (strain ATCC MYA-4609 / CBS 101355 / FGSC A1100 / Af293) (Neosartorya fumigata).